Consider the following 112-residue polypeptide: Large ribosomal subunit protein eL34A (112 aa).

Belongs to the eukaryotic ribosomal protein eL34 family. Component of the large ribosomal subunit (LSU). Mature yeast ribosomes consist of a small (40S) and a large (60S) subunit. The 40S small subunit contains 1 molecule of ribosomal RNA (18S rRNA) and at least 33 different proteins. The large 60S subunit contains 3 rRNA molecules (25S, 5.8S and 5S rRNA) and at least 46 different proteins.

It is found in the cytoplasm. Functionally, component of the ribosome, a large ribonucleoprotein complex responsible for the synthesis of proteins in the cell. The small ribosomal subunit (SSU) binds messenger RNAs (mRNAs) and translates the encoded message by selecting cognate aminoacyl-transfer RNA (tRNA) molecules. The large subunit (LSU) contains the ribosomal catalytic site termed the peptidyl transferase center (PTC), which catalyzes the formation of peptide bonds, thereby polymerizing the amino acids delivered by tRNAs into a polypeptide chain. The nascent polypeptides leave the ribosome through a tunnel in the LSU and interact with protein factors that function in enzymatic processing, targeting, and the membrane insertion of nascent chains at the exit of the ribosomal tunnel. The polypeptide is Large ribosomal subunit protein eL34A (rpl3401) (Schizosaccharomyces pombe (strain 972 / ATCC 24843) (Fission yeast)).